Consider the following 188-residue polypeptide: Elongation factor P (188 aa).

This sequence belongs to the elongation factor P family.

The protein resides in the cytoplasm. It functions in the pathway protein biosynthesis; polypeptide chain elongation. Functionally, involved in peptide bond synthesis. Stimulates efficient translation and peptide-bond synthesis on native or reconstituted 70S ribosomes in vitro. Probably functions indirectly by altering the affinity of the ribosome for aminoacyl-tRNA, thus increasing their reactivity as acceptors for peptidyl transferase. The protein is Elongation factor P of Mycoplasmoides gallisepticum (strain R(low / passage 15 / clone 2)) (Mycoplasma gallisepticum).